Here is a 418-residue protein sequence, read N- to C-terminus: UDP-N-acetylglucosamine 1-carboxyvinyltransferase (418 aa).

22-23 is a phosphoenolpyruvate binding site; sequence KN. UDP-N-acetyl-alpha-D-glucosamine is bound at residue Arg-91. Cys-115 (proton donor) is an active-site residue. Cys-115 is modified (2-(S-cysteinyl)pyruvic acid O-phosphothioketal). 2 residues coordinate UDP-N-acetyl-alpha-D-glucosamine: Asp-305 and Ile-327.

Belongs to the EPSP synthase family. MurA subfamily.

It is found in the cytoplasm. It catalyses the reaction phosphoenolpyruvate + UDP-N-acetyl-alpha-D-glucosamine = UDP-N-acetyl-3-O-(1-carboxyvinyl)-alpha-D-glucosamine + phosphate. The protein operates within cell wall biogenesis; peptidoglycan biosynthesis. In terms of biological role, cell wall formation. Adds enolpyruvyl to UDP-N-acetylglucosamine. This is UDP-N-acetylglucosamine 1-carboxyvinyltransferase from Aeromonas hydrophila subsp. hydrophila (strain ATCC 7966 / DSM 30187 / BCRC 13018 / CCUG 14551 / JCM 1027 / KCTC 2358 / NCIMB 9240 / NCTC 8049).